The primary structure comprises 71 residues: Vitellogenin-A1 (71 aa).

A signal peptide spans 1–15 (MRGIILALLLAIAGS). The region spanning 24–71 (FSESKTSVYNYEAVILNGFPESGLSRAGIKINCKVEISAYAQRSYFLK) is the Vitellogenin domain.

In terms of tissue distribution, produced by the liver, secreted into the blood and then sequestered by receptor mediated endocytosis into growing oocytes, where it is generally cleaved, giving rise to the respective yolk components.

Precursor of the major egg-yolk proteins that are sources of nutrients during early development of oviparous organisms. This chain is Vitellogenin-A1, found in Xenopus laevis (African clawed frog).